Reading from the N-terminus, the 223-residue chain is Regulator of G-protein signaling 19 (223 aa).

The disordered stretch occupies residues 1–30 (MPTPPEAEKQQTGPEEADQPPSMSSHDAAP). The span at 20-29 (PPSMSSHDAA) shows a compositional bias: low complexity. Serine 24 and serine 103 each carry phosphoserine. The RGS domain occupies 96 to 212 (SFDKLMHSPA…LSSPAYRALL (117 aa)). Residue serine 157 is modified to Phosphoserine; by MAPK1 and MAPK3. The segment at 213–223 (LQGASQSSSEA) is interaction with GIPC.

Interacts with GIPC PDZ domain. Interacts with GNAO1. Fatty acylated. Heavily palmitoylated in the cysteine string motif. In terms of processing, phosphorylated, mainly on serine residues.

It localises to the membrane. Functionally, inhibits signal transduction by increasing the GTPase activity of G protein alpha subunits thereby driving them into their inactive GDP-bound form. Binds to G-alpha subfamily 1 members, with the order G(i)a3 &gt; G(i)a1 &gt; G(o)a &gt;&gt; G(z)a/G(i)a2. Activity on G(z)-alpha is inhibited by phosphorylation and palmitoylation of the G-protein. This Bos taurus (Bovine) protein is Regulator of G-protein signaling 19 (RGS19).